The primary structure comprises 283 residues: Cell differentiation protein rcd1 (283 aa).

It belongs to the CNOT9 family.

Its function is as follows. A differentiation-controlling factor that is essential for the onset of sexual development. Induces ste11 when sexual development is invoked through nitrogen starvation. The sequence is that of Cell differentiation protein rcd1 (rcd1) from Schizosaccharomyces pombe (strain 972 / ATCC 24843) (Fission yeast).